Consider the following 232-residue polypeptide: LexA repressor (232 aa).

Residues 36–56 constitute a DNA-binding region (H-T-H motif); that stretch reads IREIGDAAGLQSTSSVAYQLK. The span at 62 to 86 shows a compositional bias: basic and acidic residues; sequence GFLRRDPNKPRAVDVRHLPETDNRT. The interval 62 to 107 is disordered; sequence GFLRRDPNKPRAVDVRHLPETDNRTKAGPKAKARPTAGASPQPELA. Residues Ser-156 and Lys-193 each act as for autocatalytic cleavage activity in the active site.

The protein belongs to the peptidase S24 family. In terms of assembly, homodimer.

It carries out the reaction Hydrolysis of Ala-|-Gly bond in repressor LexA.. Its function is as follows. Represses a number of genes involved in the response to DNA damage (SOS response), including recA and lexA. In the presence of single-stranded DNA, RecA interacts with LexA causing an autocatalytic cleavage which disrupts the DNA-binding part of LexA, leading to derepression of the SOS regulon and eventually DNA repair. This Corynebacterium efficiens (strain DSM 44549 / YS-314 / AJ 12310 / JCM 11189 / NBRC 100395) protein is LexA repressor.